The sequence spans 490 residues: Aspartyl/glutamyl-tRNA(Asn/Gln) amidotransferase subunit B (490 aa).

The protein belongs to the GatB/GatE family. GatB subfamily. In terms of assembly, heterotrimer of A, B and C subunits.

It catalyses the reaction L-glutamyl-tRNA(Gln) + L-glutamine + ATP + H2O = L-glutaminyl-tRNA(Gln) + L-glutamate + ADP + phosphate + H(+). It carries out the reaction L-aspartyl-tRNA(Asn) + L-glutamine + ATP + H2O = L-asparaginyl-tRNA(Asn) + L-glutamate + ADP + phosphate + 2 H(+). Functionally, allows the formation of correctly charged Asn-tRNA(Asn) or Gln-tRNA(Gln) through the transamidation of misacylated Asp-tRNA(Asn) or Glu-tRNA(Gln) in organisms which lack either or both of asparaginyl-tRNA or glutaminyl-tRNA synthetases. The reaction takes place in the presence of glutamine and ATP through an activated phospho-Asp-tRNA(Asn) or phospho-Glu-tRNA(Gln). This Prochlorococcus marinus (strain AS9601) protein is Aspartyl/glutamyl-tRNA(Asn/Gln) amidotransferase subunit B.